Here is a 612-residue protein sequence, read N- to C-terminus: Lipoma-preferred partner (612 aa).

2 disordered regions span residues 1–118 (MSHP…SSLD) and 132–219 (ECSS…SSRP). The span at 26-40 (THSFGNPSISVSTQQ) shows a compositional bias: polar residues. The span at 41–53 (PPKKFAPVVAPKP) shows a compositional bias: low complexity. Lys108 is subject to N6-acetyllysine. Residues Ser116 and Ser151 each carry the phosphoserine modification. Polar residues-rich tracts occupy residues 143–158 (QSSTGSTASPPVSTPV) and 171–181 (PLTATKKSTLK). Residues 183–193 (QPAPQAGPIPV) are compositionally biased toward pro residues. Positions 209–219 (SYTTASTSSRP) are enriched in polar residues. Residues Tyr244 and Tyr301 each carry the phosphotyrosine modification. Positions 307 to 387 (YGGRNDSDPT…LGPSSVAPSF (81 aa)) are disordered. Over residues 314–323 (DPTYGQQGHP) the composition is skewed to polar residues. Lys327 participates in a covalent cross-link: Glycyl lysine isopeptide (Lys-Gly) (interchain with G-Cter in SUMO1). Thr333 is modified (phosphothreonine). At Ser375 the chain carries Phosphoserine. LIM zinc-binding domains are found at residues 414–473 (GRCA…INTL), 474–534 (EQCN…KFAP), and 535–603 (RCSV…RIRV).

It belongs to the zyxin/ajuba family. In terms of assembly, interacts with VASP, with PDZ domains of SCRIB and with ACTN1/alpha-actinin. As to expression, expressed in a wide variety of tissues but no or very low expression in brain and peripheral leukocytes.

It is found in the nucleus. The protein localises to the cytoplasm. The protein resides in the cell junction. Its subcellular location is the cell membrane. Its function is as follows. May play a structural role at sites of cell adhesion in maintaining cell shape and motility. In addition to these structural functions, it may also be implicated in signaling events and activation of gene transcription. May be involved in signal transduction from cell adhesion sites to the nucleus allowing successful integration of signals arising from soluble factors and cell-cell adhesion sites. Also suggested to serve as a scaffold protein upon which distinct protein complexes are assembled in the cytoplasm and in the nucleus. The sequence is that of Lipoma-preferred partner (LPP) from Homo sapiens (Human).